Here is a 435-residue protein sequence, read N- to C-terminus: Membrane-bound ghrelin O-acyltransferase MBOAT4 (435 aa).

At 1-5 (MDWLQ) the chain is on the lumenal side. The chain crosses the membrane as a helical span at residues 6–26 (LFFLHPLSFYQGAAFPFALLF). The Cytoplasmic portion of the chain corresponds to 27–40 (NYLCILDTFSTRAR). A helical transmembrane segment spans residues 41–56 (YLFLLAGGGVLAFAAM). The Lumenal segment spans residues 57–59 (GPY). Residues 60–76 (SLLIFIPALCAVALVSF) traverse the membrane as a helical segment. The Cytoplasmic portion of the chain corresponds to 77–82 (LSPQEV). A helical membrane pass occupies residues 83 to 101 (HRLTFFFQMGWQTLCHLGL). The Lumenal portion of the chain corresponds to 102–120 (HYTEYYLGEPPPVRFYITL). A helical transmembrane segment spans residues 121 to 136 (SSLMLLTQRVTSLSLD). Residues 137–206 (ICEGKVEAPR…YPSISFRALT (70 aa)) are Cytoplasmic-facing. The helical transmembrane segment at 207–227 (WRGLQILGLECLKVALRSAVS) threads the bilayer. The Lumenal segment spans residues 228–240 (AGAGLDDCQRLEC). The helical transmembrane segment at 241–261 (IYLMWSTAWLFKLTYYSHWIL) threads the bilayer. At 262 to 324 (DDSLLHAAGF…RRLVFRKSRR (63 aa)) the chain is on the cytoplasmic side. Active-site residues include Asn307 and His338. The helical transmembrane segment at 325–338 (WPLLQTFAFSAWWH) threads the bilayer. Residues 339–340 (GL) lie on the Lumenal side of the membrane. A helical transmembrane segment spans residues 341-357 (HPGQVFGFLCWSVMVKA). The Cytoplasmic portion of the chain corresponds to 358-376 (DYLIHTFANVCIRSWPLRL). The helical transmembrane segment at 377-397 (LYRALTWAHTQLIIAYIMLAV) threads the bilayer. The Lumenal segment spans residues 398–407 (EGRSLSSLCQ). A helical membrane pass occupies residues 408-428 (LCCSYNSLFPVMYGLLLFLLA). Over 429-435 (ERKDKRN) the chain is Cytoplasmic.

Belongs to the membrane-bound acyltransferase family. Monomer. In terms of processing, not glycosylated. Highly expressed in stomach and pancreas. Lower expression in small intestine and colon. Very low expression in testis.

It is found in the endoplasmic reticulum membrane. It carries out the reaction octanoyl-CoA + L-seryl-[protein] = O-octanoyl-L-seryl-[protein] + CoA. The enzyme catalyses hexanoyl-CoA + L-seryl-[protein] = O-hexanoyl-L-seryl-[protein] + CoA. It catalyses the reaction decanoyl-CoA + L-seryl-[protein] = O-decanoyl-L-seryl-[protein] + CoA. The catalysed reaction is L-seryl-[protein] + acetyl-CoA = O-acetyl-L-seryl-[protein] + CoA. It carries out the reaction L-seryl-[protein] + butanoyl-CoA = O-butanoyl-L-seryl-[protein] + CoA. The enzyme catalyses pentanoyl-CoA + L-seryl-[protein] = O-pentanoyl-L-seryl-[protein] + CoA. It catalyses the reaction heptanoyl-CoA + L-seryl-[protein] = O-heptanoyl-L-seryl-[protein] + CoA. The catalysed reaction is nonanoyl-CoA + L-seryl-[protein] = O-nonanoyl-L-seryl-[protein] + CoA. It carries out the reaction L-seryl-[protein] + dodecanoyl-CoA = O-dodecanoyl-L-seryl-[protein] + CoA. The enzyme catalyses L-seryl-[protein] + tetradecanoyl-CoA = O-tetradecanoyl-L-seryl-[protein] + CoA. It catalyses the reaction a fatty acyl-CoA + L-seryl-[protein] = O-fatty acyl-L-seryl-[protein] + CoA. With respect to regulation, inhibited by 1-[2-cyano-3,12-dioxooleana-1,9(11)- dien-28-oyl]ethylamide (CDDO-EA) with an IC(50) of 60 uM. Inhibited by Fe3+ and Cu2+ and the O-acyltransferase activity is completely blocked over 5 mM Fe3+ and 0.5 mM Cu2+. In terms of biological role, catalyzes ghrelin acylation at 'Ser-3' using preferentially octanoyl-CoA, hexanoyl-CoA and decanoyl-CoA as acyl-CoA donors leading to ghrelin activity. In vitro also uses acyl-CoA donors of different lengths from short-chain (C2) to long-chain fatty acids (C16) knowing that acyl-CoA donors from butanoyl-CoA (C4) to dodecanoyl-CoA (C12) are more efficient compared to longer acyl-CoA donors, such as myristoyl-CoA (C14) and palmitoyl-CoA (C16) that are not efficient. Functionally, inactive octanoyltransferase activity. In Mus musculus (Mouse), this protein is Membrane-bound ghrelin O-acyltransferase MBOAT4.